The chain runs to 605 residues: uncharacterized protein (605 aa).

Positions Val111–Val151 are disordered.

The protein resides in the golgi apparatus. This is an uncharacterized protein from Schizosaccharomyces pombe (strain 972 / ATCC 24843) (Fission yeast).